Consider the following 797-residue polypeptide: Protein tamozhennic (797 aa).

Residues 79–146 (QNAIVAFETI…AAEDTFVLEG (68 aa)) form the PUB domain. Disordered regions lie at residues 515–570 (AGGI…ISDL) and 638–697 (LSIT…SAGV). Basic and acidic residues predominate over residues 662–679 (EKARTLDKKSGTGRREAK). The RanBP2-type zinc-finger motif lies at 735-766 (IVTSPNEWSCSFCTFLNPDTKRICEMCCRSKD).

As to quaternary structure, homomultimer. Binds to dl and msl-1 via their nuclear localization signal (NLS). Also binds to Ran, Ran-like and mbo.

The protein localises to the cytoplasm. Its function is as follows. Has an essential role during oogenesis and embryogenesis, perhaps in modulating the levels of nuclear import of additional proteins. Modulates the nuclear import of dorsal (dl), Dif and male specific lethal 1 (msl-1). Negatively regulates nuclear import of dl and controls the accumulation of dl in the nucleus after immune challenge. The polypeptide is Protein tamozhennic (tamo) (Drosophila melanogaster (Fruit fly)).